The primary structure comprises 456 residues: Neurexin-3-beta (456 aa).

An N-terminal signal peptide occupies residues 1-35 (MHLRIHARRNPPRRPAWTLGIWSLFWGCIVSSVWS). At 36–381 (SSNVASSSSS…EVIRESSSTT (346 aa)) the chain is on the extracellular side. The interval 41–63 (SSSSSPGSHSQHEHHFHGSKHHS) is disordered. The span at 52-63 (HEHHFHGSKHHS) shows a compositional bias: basic residues. The Laminin G-like domain occupies 82-282 (ATYIFGKSGG…NPNIKINGSV (201 aa)). Residues D134 and I151 each contribute to the Ca(2+) site. An N-linked (GlcNAc...) asparagine glycan is attached at N181. 2 residues coordinate Ca(2+): I233 and N235. N-linked (GlcNAc...) asparagine glycans are attached at residues N279 and N323. The interval 316-340 (ATTTTRKNRSTASIQPTSDDLVSSA) is disordered. Over residues 325 to 340 (STASIQPTSDDLVSSA) the composition is skewed to polar residues. Residue S339 is glycosylated (O-linked (Xyl...) (heparan sulfate) serine). The chain crosses the membrane as a helical span at residues 382 to 402 (GMVVGIVAAAALCILILLYAM). The Cytoplasmic portion of the chain corresponds to 403-456 (YKYRNRDEGSYQVDETRNYISNSAQSNGTLLKEKPPSSKGGHKKQKNKDKEYYV). Residues 424–456 (NSAQSNGTLLKEKPPSSKGGHKKQKNKDKEYYV) are disordered.

The protein belongs to the neurexin family. In terms of assembly, weakly interacts with CBLN1 and CBLN2. Very weak binding, if any, to CBLN4. Specific isoforms bind neuroligins NLGN1, NLGN2 and NLGN3. Interacts with CLSTN3. Post-translationally, processed by alpha-secretase leading to the formation of an extracellular soluble protein as well as a C-terminal membrane-embedded fragment (CTF). Proteolysis of these CTFs by gamma-secretase releases intracellular domains (ICDs) and extracellular peptides. O-glycosylated; contains heparan sulfate. Heparan sulfate attachment is required for synapse development by mediating interactions with neuroligins.

Its subcellular location is the presynaptic cell membrane. It localises to the secreted. Its function is as follows. Neuronal cell surface protein that may be involved in cell recognition and cell adhesion. May mediate intracellular signaling. Functions as part of a trans-synaptic complex by binding to cerebellins and postsynaptic GRID1. This interaction helps regulate the activity of NMDA and AMPA receptors at hippocampal synapses without affecting synapse formation. NRXN3B-CBLN2-GRID1 complex transduce presynaptic signals into postsynaptic AMPAR response. The polypeptide is Neurexin-3-beta (NRXN3) (Bos taurus (Bovine)).